A 615-amino-acid polypeptide reads, in one-letter code: DNA mismatch repair protein MutL (615 aa).

The segment at 363–397 (FAEPAVREPVAPRYTPAPASGSRPAAPWPNAQPGY) is disordered. Positions 378–391 (PAPASGSRPAAPWP) are enriched in low complexity.

Belongs to the DNA mismatch repair MutL/HexB family.

This protein is involved in the repair of mismatches in DNA. It is required for dam-dependent methyl-directed DNA mismatch repair. May act as a 'molecular matchmaker', a protein that promotes the formation of a stable complex between two or more DNA-binding proteins in an ATP-dependent manner without itself being part of a final effector complex. This is DNA mismatch repair protein MutL from Escherichia coli O157:H7.